Here is a 433-residue protein sequence, read N- to C-terminus: Protein FAM98B (433 aa).

The interval 303 to 433 (GRVPDRGGRP…GGGGGGYRRY (131 aa)) is disordered. Residues 305 to 314 (VPDRGGRPNE) are compositionally biased toward basic and acidic residues. Positions 331–433 (GGGGRGGWGG…GGGGGGYRRY (103 aa)) are enriched in gly residues.

This sequence belongs to the FAM98 family. As to quaternary structure, homodimer. Component of the tRNA-splicing ligase complex. Interacts with FAM98A. As to expression, expressed strongly in colorectal cancer tissues compared to wild-type colon samples (at protein level). Expressed strongly in colorectal cancer tissues compared to wild-type colon samples.

The protein localises to the nucleus. It localises to the cytoplasm. In terms of biological role, positively stimulates PRMT1-induced protein arginine dimethylated arginine methylation. The polypeptide is Protein FAM98B (FAM98B) (Homo sapiens (Human)).